Reading from the N-terminus, the 1163-residue chain is Integrin alpha-X (1163 aa).

Residues 1 to 19 form the signal peptide; sequence MTRTRAALLLFTALATSLG. The Extracellular segment spans residues 20-1107; it reads FNLDTEELTA…EKYKVHNPTP (1088 aa). FG-GAP repeat units lie at residues 23–78 and 79–138; these read DTEE…ACEP and IGLQ…TQRL. The N-linked (GlcNAc...) asparagine glycan is linked to asparagine 61. Cysteine 69 and cysteine 76 are joined by a disulfide. Asparagine 89 carries N-linked (GlcNAc...) asparagine glycosylation. Cystine bridges form between cysteine 108–cysteine 126 and cysteine 116–cysteine 145. Positions 157, 159, 161, and 259 each coordinate Mg(2+). One can recognise a VWFA domain in the interval 165-339; it reads RNFATMMNFV…KEKIFAIEGT (175 aa). FG-GAP repeat units follow at residues 340-391, 392-443, 444-504, 507-565, and 570-630; these read ETTS…PTFI, NMSQ…SRQW, RMKA…WRRW, DAVL…PSIS, and QRIA…FIPA. An N-linked (GlcNAc...) asparagine glycan is attached at asparagine 392. Residues aspartate 466, aspartate 468, aspartate 470, and aspartate 474 each coordinate Ca(2+). A disulfide bridge connects residues cysteine 495 and cysteine 506. Ca(2+)-binding residues include aspartate 530, asparagine 532, aspartate 534, aspartate 538, aspartate 593, aspartate 597, and aspartate 601. 2 disulfides stabilise this stretch: cysteine 639–cysteine 722 and cysteine 655–cysteine 712. Residues asparagine 697 and asparagine 735 are each glycosylated (N-linked (GlcNAc...) asparagine). Disulfide bonds link cysteine 771–cysteine 777 and cysteine 848–cysteine 863. Residues asparagine 899 and asparagine 939 are each glycosylated (N-linked (GlcNAc...) asparagine). Disulfide bonds link cysteine 998–cysteine 1022 and cysteine 1027–cysteine 1032. The N-linked (GlcNAc...) asparagine glycan is linked to asparagine 1050. Residues 1108–1128 form a helical membrane-spanning segment; that stretch reads LIVGSSIGGLLLLALITAVLY. The Cytoplasmic segment spans residues 1129 to 1163; sequence KVGFFKRQYKEMMEEANGQIAPENGTQTPSPPSEK. The short motif at 1131–1135 is the GFFKR motif element; it reads GFFKR.

It belongs to the integrin alpha chain family. In terms of assembly, heterodimer of an alpha and a beta subunit. Alpha-X associates with beta-2. Predominantly expressed in monocytes and granulocytes.

Its subcellular location is the membrane. Its function is as follows. Integrin alpha-X/beta-2 is a receptor for fibrinogen. It recognizes the sequence G-P-R in fibrinogen. It mediates cell-cell interaction during inflammatory responses. It is especially important in monocyte adhesion and chemotaxis. This Homo sapiens (Human) protein is Integrin alpha-X (ITGAX).